The chain runs to 1277 residues: Y' element ATP-dependent helicase YEL077C (1277 aa).

Positions 222–399 (EIYMADTPSV…LQRIGLTGLA (178 aa)) constitute a Helicase ATP-binding domain. Residue 235–242 (APPGYGKT) participates in ATP binding. Residues 345–348 (DEFH) carry the DEAH box motif. The Helicase C-terminal domain occupies 454-605 (ALKLLLALFE…EFYGLESKKG (152 aa)). 2 disordered regions span residues 696 to 763 (NVRT…NATT) and 775 to 895 (TTKS…NRFH). Positions 775–878 (TTKSINSSTN…ATTTESTNAS (104 aa)) are enriched in low complexity. Positions 879–895 (AKEDANKDGNAEDNRFH) are enriched in basic and acidic residues.

This sequence belongs to the helicase family. Yeast subtelomeric Y' repeat subfamily.

Functionally, catalyzes DNA unwinding and is involved in telomerase-independent telomere maintenance. The polypeptide is Y' element ATP-dependent helicase YEL077C (Saccharomyces cerevisiae (strain ATCC 204508 / S288c) (Baker's yeast)).